A 386-amino-acid polypeptide reads, in one-letter code: Chaperone protein DnaJ (386 aa).

Positions 5–69 (DLYDVLGVKK…QKRAQYDQFG (65 aa)) constitute a J domain. Residues 140 to 224 (GKETSIKYNR…CHGAGVTEER (85 aa)) form a CR-type zinc finger. Zn(2+) contacts are provided by cysteine 153, cysteine 156, cysteine 170, cysteine 173, cysteine 196, cysteine 199, cysteine 212, and cysteine 215. CXXCXGXG motif repeat units lie at residues 153-160 (CHTCHGSG), 170-177 (CSTCHGQG), 196-203 (CPTCGGKG), and 212-219 (CDTCHGAG).

It belongs to the DnaJ family. Homodimer. It depends on Zn(2+) as a cofactor.

It is found in the cytoplasm. Its function is as follows. Participates actively in the response to hyperosmotic and heat shock by preventing the aggregation of stress-denatured proteins and by disaggregating proteins, also in an autonomous, DnaK-independent fashion. Unfolded proteins bind initially to DnaJ; upon interaction with the DnaJ-bound protein, DnaK hydrolyzes its bound ATP, resulting in the formation of a stable complex. GrpE releases ADP from DnaK; ATP binding to DnaK triggers the release of the substrate protein, thus completing the reaction cycle. Several rounds of ATP-dependent interactions between DnaJ, DnaK and GrpE are required for fully efficient folding. Also involved, together with DnaK and GrpE, in the DNA replication of plasmids through activation of initiation proteins. The chain is Chaperone protein DnaJ from Limosilactobacillus fermentum (strain NBRC 3956 / LMG 18251) (Lactobacillus fermentum).